Consider the following 414-residue polypeptide: Secernin-1 (414 aa).

The protein belongs to the peptidase C69 family. Secernin subfamily.

Its subcellular location is the cytoplasm. In terms of biological role, regulates exocytosis in mast cells. Increases both the extent of secretion and the sensitivity of mast cells to stimulation with calcium. This chain is Secernin-1 (Scrn1), found in Mus musculus (Mouse).